Consider the following 793-residue polypeptide: MKGFKDWVFALSNSMASSRPLLGSDPFFRDPHQEQDNHSQAPAAPQPVTLSEPPCSTSSDLEILPPLSQQQVPLESLYQSSIDLNGKKHNPLAKIGGLQVQFLRLVQRFGQSQNNILVSKVLYRVHLAMLIRAEESELKNVKLRQDRAKALAREQESSGIPELDFSLRILVLGKTGVGKSATINSIFGQPKSETDAFRPGTDRIEEVMGTVSGVKVTFIDTPGFHPLSSSSTRKNRKILLSIKRYVKKRPPDVVLYLDRLDMIDMRYSDFSLLQLITEIFGAAIWLNTILVMTHSAATTEGRNGQSVNYESYVGQRMDVVQHYIHQAVSDTKLENPVLLVENHPSCKKNLAGEYVLPNGVVWKPQFMFLCVCTKVLGDVQSLLRFRDSIGLGQPSSTRTASLPHLLSVFLRRRLSSGADETEKEIDKLLNLDLEEEDEYDQLPTIRILGKSRFEKLSKSQKKEYLDELDYRETLYLKKQLKEECRRRRDEKLVEEENLEDTEQRDQAAVPLPDMAGPDSFDSDFPAHRYRCVSAGDQWLVRPVYDPQGWDRDVGFDGINIETAAKINRNLFASATGQVSRDKQRFTIQSETNAAYTRNFREQTFSVAVDLQSSGEDLVYSFQGGTKLQTFKHNTTDVGVGLTSFGGKYYVGGKLEDTLLVGKRVKLTANAGQMRGSGQTANGGSFEACIRGRDYPVRNEQIGLTMTALSFKRELVLNYGLQTQFRPARGTNIDVNINMNNRKMGKINVKLNSSEHWEIALISALTMFKALVRRSKTEMTEENEEEKIVNFLVS.

The segment at 22–59 (LGSDPFFRDPHQEQDNHSQAPAAPQPVTLSEPPCSTSS) is disordered. A compositionally biased stretch (basic and acidic residues) spans 27–37 (FFRDPHQEQDN). Positions 130 to 157 (LIRAEESELKNVKLRQDRAKALAREQES) form a coiled coil. In terms of domain architecture, AIG1-type G spans 164–394 (DFSLRILVLG…FRDSIGLGQP (231 aa)). The segment at 173 to 180 (GKTGVGKS) is G1. GTP-binding positions include 176–181 (GVGKSA) and 195–200 (DAFRPG). Ser180 contributes to the Mg(2+) binding site. Positions 195-198 (DAFR) are homodimerization. The tract at residues 199–203 (PGTDR) is G2. Positions 220–223 (DTPG) are G3. The homodimerization stretch occupies residues 259-264 (RLDMID). The chain crosses the membrane as a helical span at residues 279-297 (IFGAAIWLNTILVMTHSAA). The interval 293–296 (THSA) is G4. Residues His294 and 341 to 342 (EN) contribute to the GTP site. A G5 region spans residues 341-343 (ENH). 2 coiled-coil regions span residues 410-442 (LRRR…YDQL) and 477-503 (KKQL…DTEQ).

It belongs to the TRAFAC class TrmE-Era-EngA-EngB-Septin-like GTPase superfamily. AIG1/Toc34/Toc159-like paraseptin GTPase family. TOC159 subfamily. Homodimer. Part of the TOC core complex that includes 1 protein for the specific recognition of transit peptides surrounded by a ring composed of four proteins forming translocation channels, and four to five GTP-binding proteins providing energy. This core complex can interact with components of the TIC complex to form a larger import complex. Chloroplastic protein precursor such as prSS (precursor of the RuBisCO small subunit) interacts with these complexes. The TOC complex contains a specific subset of polar lipids such as digalactosyldiacylglyceride (DGDG), phosphatidylcholine (PC) and phosphatidylglycerol (PG). Interacts with TOC33 and TOC75. Mg(2+) is required as a cofactor. As to expression, expressed in seedlings, leaves, flowers, and roots.

It is found in the plastid. The protein resides in the chloroplast outer membrane. The protein localises to the cytoplasm. In terms of biological role, GTPase involved in protein precursor import into chloroplasts. Seems to recognize chloroplast-destined precursor proteins and regulate their presentation to the translocation channel through GTP hydrolysis. Probably specialized in the import of nuclear encoded photosynthetic preproteins from the cytoplasm to the chloroplast. The polypeptide is Translocase of chloroplast 90, chloroplastic (TOC90) (Arabidopsis thaliana (Mouse-ear cress)).